The sequence spans 879 residues: MKQLSSAEVRQLFLDFFKEKGHTIEPSAPLVPNNDPTILWINSGVATMKKYFDGSVIPDNPRMANAQKSIRTNDIENVGKTARHHTFFEMLGNFSIGDYFKEGAIVFAWEFLTSPKWIGFDPDKLYVTVYPEDEEAKTLWREKIGLSDDHIVEIEDNFWDIGIGPSGPDSEIFYDRGPAFGDDASDPELYPGGENERYLEIWNLVFSQFNHNPDGTYTPLPKQNIDTGMGLERMVSIIQDAPTNFETDLFMPIIREVEQIAGVKYGHSQENDVAFKVIADHIRTVAFAIGDGALPSNEGRGYILRRLLRRAVRYAKVLTINEPFMYKLVPVVGKIMNSFYPEVENQTDFIQKVIRTEEERFHETLNEGLAILETILKTAKETNEQIIKGADIFKLYDTFGFPVELTEEYAEDHGLKVDHAGFEAEMKEQRDRARSARADVKSMQVQGELLANLTEKSAFVGYNSTEHVSEILYLIQDDTLVEEVAAGSEAQVIFKETPFYAESGGQVADKGTIESETGLAYVEDVQKAPNKQNLHRISVKEGVLKTGDTVKLAVDKVKRRETIKNHTATHLLHRALKDTLGEHVNQAGSLVSPDRLRFDFSHFGQITEEELTKLEEIVNEKIWEQINVVIEEMPIAEAKELGAMALFGEKYGDIVRVVQVGKYSIELCGGVHVRNTADIGLFKIVSETGIGAGTRRIEAVTGKEAYRFVTEQENTLKQAASLLKTTTKETPQKVEQLQADLREVKRENESLLSKLASAASADIFESPEEIGGVKVIAKQVNAKDMNQLRQFVDNWKDKKIGGILVLGAVQGDKVNLISAVSEEAIKAGYHAGKLLKEVATRCGGNGGGRPDMAQAGGKNPAELGTALDYVSTWVKEQQA.

Zn(2+) contacts are provided by His566, His570, Cys668, and His672.

Belongs to the class-II aminoacyl-tRNA synthetase family. The cofactor is Zn(2+).

It is found in the cytoplasm. It catalyses the reaction tRNA(Ala) + L-alanine + ATP = L-alanyl-tRNA(Ala) + AMP + diphosphate. Its function is as follows. Catalyzes the attachment of alanine to tRNA(Ala) in a two-step reaction: alanine is first activated by ATP to form Ala-AMP and then transferred to the acceptor end of tRNA(Ala). Also edits incorrectly charged Ser-tRNA(Ala) and Gly-tRNA(Ala) via its editing domain. This chain is Alanine--tRNA ligase, found in Listeria monocytogenes serotype 4b (strain F2365).